The following is a 306-amino-acid chain: MSCRELIILGCSSQQPTRMRNQGAYLFRWNNEGLLFDPGEGTQRQFIFANIAPTVVSRIFISHFHGDHCLGLGSMLMRLNLDKVTHPIHCYYPASGKKYFDRLRYGTIYHETIHVVEHPVDKEGIVEDFGNFRIEARKLDHLVDTLGWRITEPDTIKFIPEKIKAAGLRGPIMQDLLRDDHVTVNGNTIYLKDVSYVRKGDSIAVIADTLPCQSVVDLAKDARIMLCESTYLEEHLHLAKSHYHMTAKQAATQALAAGAQQLVLTHFSARYLNSKEFELEAGKIFPNVAAAEEFRSYPFPKNPSSK.

Zn(2+) is bound by residues His-63, His-65, Asp-67, His-68, His-141, Asp-208, and His-266. Asp-67 serves as the catalytic Proton acceptor.

This sequence belongs to the RNase Z family. Homodimer. It depends on Zn(2+) as a cofactor.

It catalyses the reaction Endonucleolytic cleavage of RNA, removing extra 3' nucleotides from tRNA precursor, generating 3' termini of tRNAs. A 3'-hydroxy group is left at the tRNA terminus and a 5'-phosphoryl group is left at the trailer molecule.. Functionally, zinc phosphodiesterase, which displays some tRNA 3'-processing endonuclease activity. Probably involved in tRNA maturation, by removing a 3'-trailer from precursor tRNA. The chain is Ribonuclease Z from Chlamydia caviae (strain ATCC VR-813 / DSM 19441 / 03DC25 / GPIC) (Chlamydophila caviae).